The following is a 421-amino-acid chain: Acyl-coenzyme A thioesterase 1 (421 aa).

Active-site charge relay system residues include serine 232, aspartate 326, and histidine 360.

The protein belongs to the C/M/P thioester hydrolase family. As to quaternary structure, monomer.

Its subcellular location is the cytoplasm. It is found in the cytosol. It catalyses the reaction hexadecanoyl-CoA + H2O = hexadecanoate + CoA + H(+). The enzyme catalyses decanoyl-CoA + H2O = decanoate + CoA + H(+). The catalysed reaction is dodecanoyl-CoA + H2O = dodecanoate + CoA + H(+). It carries out the reaction tetradecanoyl-CoA + H2O = tetradecanoate + CoA + H(+). It catalyses the reaction octadecanoyl-CoA + H2O = octadecanoate + CoA + H(+). The enzyme catalyses eicosanoyl-CoA + H2O = eicosanoate + CoA + H(+). The catalysed reaction is (9Z)-octadecenoyl-CoA + H2O = (9Z)-octadecenoate + CoA + H(+). It carries out the reaction (9Z)-hexadecenoyl-CoA + H2O = (9Z)-hexadecenoate + CoA + H(+). It catalyses the reaction (9E)-octadecenoyl-CoA + H2O = (9E)-octadecenoate + CoA + H(+). It functions in the pathway lipid metabolism; fatty acid metabolism. In terms of biological role, catalyzes the hydrolysis of acyl-CoAs into free fatty acids and coenzyme A (CoASH), regulating their respective intracellular levels. More active towards saturated and unsaturated long chain fatty acyl-CoAs (C12-C20). This chain is Acyl-coenzyme A thioesterase 1 (ACOT1), found in Homo sapiens (Human).